The sequence spans 354 residues: Isopentenyl-diphosphate delta-isomerase (354 aa).

Residue 11–12 (KK) participates in substrate binding. FMN contacts are provided by residues S67, 68–70 (SMT), S98, and N126. 98-100 (SFK) contacts substrate. A substrate-binding site is contributed by Q160. Position 161 (E161) interacts with Mg(2+). FMN is bound by residues K192, T222, and 289–290 (AA).

This sequence belongs to the IPP isomerase type 2 family. Homooctamer. Dimer of tetramers. Requires FMN as cofactor. NADPH serves as cofactor. It depends on Mg(2+) as a cofactor.

It localises to the cytoplasm. It catalyses the reaction isopentenyl diphosphate = dimethylallyl diphosphate. Involved in the biosynthesis of isoprenoids. Catalyzes the 1,3-allylic rearrangement of the homoallylic substrate isopentenyl (IPP) to its allylic isomer, dimethylallyl diphosphate (DMAPP). The sequence is that of Isopentenyl-diphosphate delta-isomerase from Borreliella afzelii (strain PKo) (Borrelia afzelii).